A 118-amino-acid chain; its full sequence is MRKSYRIKKEAEFQQVFETRNSVANRQFVVYSMEKPQQPHFRVGISVGKKIGNAVHRNWVKRRIRQSLLELKPHLKQDVDFLVIARPRADGISMTDAKRSLVHVLKLAKLLDSDYSEE.

The protein belongs to the RnpA family. Consists of a catalytic RNA component (M1 or rnpB) and a protein subunit.

The enzyme catalyses Endonucleolytic cleavage of RNA, removing 5'-extranucleotides from tRNA precursor.. Its function is as follows. RNaseP catalyzes the removal of the 5'-leader sequence from pre-tRNA to produce the mature 5'-terminus. It can also cleave other RNA substrates such as 4.5S RNA. The protein component plays an auxiliary but essential role in vivo by binding to the 5'-leader sequence and broadening the substrate specificity of the ribozyme. This is Ribonuclease P protein component from Levilactobacillus brevis (strain ATCC 367 / BCRC 12310 / CIP 105137 / JCM 1170 / LMG 11437 / NCIMB 947 / NCTC 947) (Lactobacillus brevis).